The sequence spans 215 residues: uncharacterized protein (215 aa).

Residues Gly53, Glu74, and Asp97 each coordinate S-adenosyl-L-methionine.

The protein belongs to the methyltransferase superfamily. YrrT family.

In terms of biological role, could be a S-adenosyl-L-methionine-dependent methyltransferase. This is an uncharacterized protein from Geobacillus kaustophilus (strain HTA426).